A 347-amino-acid chain; its full sequence is Protease HtpX homolog (347 aa).

3 consecutive transmembrane segments (helical) span residues 8–28, 46–66, and 76–96; these read IAFG…VVIA, ALTA…IAIV, and WGFI…TYIA. Histidine 174 provides a ligand contact to Zn(2+). Glutamate 175 is an active-site residue. Histidine 178 serves as a coordination point for Zn(2+). A run of 2 helical transmembrane segments spans residues 185 to 205 and 221 to 241; these read ALML…VSSV and LLAA…LLVL. A Zn(2+)-binding site is contributed by glutamate 248.

This sequence belongs to the peptidase M48B family. It depends on Zn(2+) as a cofactor.

It localises to the cell membrane. This chain is Protease HtpX homolog, found in Pyrobaculum islandicum (strain DSM 4184 / JCM 9189 / GEO3).